Consider the following 741-residue polypeptide: Catalase-peroxidase 2 (741 aa).

Positions 1–28 are cleaved as a signal peptide; the sequence is MQKKRIGKSVVAALAIIAMSAGTVAAWA. The tryptophyl-tyrosyl-methioninium (Trp-Tyr) (with M-254) cross-link spans 107–228; the sequence is WHGAGTYRTY…LAATQMGLIY (122 aa). The Proton acceptor role is filled by His108. A cross-link (tryptophyl-tyrosyl-methioninium (Tyr-Met) (with W-107)) is located at residues 228–254; sequence YVNPEGPNGNPDPVAAAKDIREAFGRM. A heme b-binding site is contributed by His269.

This sequence belongs to the peroxidase family. Peroxidase/catalase subfamily. Homodimer or homotetramer. It depends on heme b as a cofactor. In terms of processing, formation of the three residue Trp-Tyr-Met cross-link is important for the catalase, but not the peroxidase activity of the enzyme.

The enzyme catalyses H2O2 + AH2 = A + 2 H2O. It carries out the reaction 2 H2O2 = O2 + 2 H2O. Functionally, bifunctional enzyme with both catalase and broad-spectrum peroxidase activity. The polypeptide is Catalase-peroxidase 2 (Burkholderia ambifaria (strain MC40-6)).